The sequence spans 213 residues: Large ribosomal subunit protein uL3 (213 aa).

Gln-151 bears the N5-methylglutamine mark.

It belongs to the universal ribosomal protein uL3 family. Part of the 50S ribosomal subunit. Forms a cluster with proteins L14 and L19. Methylated by PrmB.

Its function is as follows. One of the primary rRNA binding proteins, it binds directly near the 3'-end of the 23S rRNA, where it nucleates assembly of the 50S subunit. The protein is Large ribosomal subunit protein uL3 of Rhizobium etli (strain CIAT 652).